We begin with the raw amino-acid sequence, 173 residues long: RNA 2',3'-cyclic phosphodiesterase (173 aa).

Catalysis depends on H38, which acts as the Proton donor. 2 consecutive short sequence motifs (HXTX) follow at residues 38–41 and 118–121; these read HITV and HLTI. The Proton acceptor role is filled by H118.

It belongs to the 2H phosphoesterase superfamily. ThpR family.

The enzyme catalyses a 3'-end 2',3'-cyclophospho-ribonucleotide-RNA + H2O = a 3'-end 2'-phospho-ribonucleotide-RNA + H(+). Functionally, hydrolyzes RNA 2',3'-cyclic phosphodiester to an RNA 2'-phosphomonoester. The sequence is that of RNA 2',3'-cyclic phosphodiesterase from Methanocaldococcus jannaschii (strain ATCC 43067 / DSM 2661 / JAL-1 / JCM 10045 / NBRC 100440) (Methanococcus jannaschii).